The sequence spans 230 residues: tRNA (guanine-N(7)-)-methyltransferase (230 aa).

S-adenosyl-L-methionine-binding residues include E61, E86, N113, and D136. D136 is an active-site residue. Residues K140, D172, and 208–211 contribute to the substrate site; that span reads TKYE.

Belongs to the class I-like SAM-binding methyltransferase superfamily. TrmB family.

It catalyses the reaction guanosine(46) in tRNA + S-adenosyl-L-methionine = N(7)-methylguanosine(46) in tRNA + S-adenosyl-L-homocysteine. The protein operates within tRNA modification; N(7)-methylguanine-tRNA biosynthesis. In terms of biological role, catalyzes the formation of N(7)-methylguanine at position 46 (m7G46) in tRNA. The protein is tRNA (guanine-N(7)-)-methyltransferase of Mycobacterium leprae (strain Br4923).